The sequence spans 271 residues: Phosphate import ATP-binding protein PstB 3 (271 aa).

Residues 20-266 (LRVEGLGFYY…PQETQTRDYV (247 aa)) form the ABC transporter domain. 52-59 (GPSGCGKS) contacts ATP.

Belongs to the ABC transporter superfamily. Phosphate importer (TC 3.A.1.7) family. The complex is composed of two ATP-binding proteins (PstB), two transmembrane proteins (PstC and PstA) and a solute-binding protein (PstS).

It localises to the cell inner membrane. The catalysed reaction is phosphate(out) + ATP + H2O = ADP + 2 phosphate(in) + H(+). Part of the ABC transporter complex PstSACB involved in phosphate import. Responsible for energy coupling to the transport system. The sequence is that of Phosphate import ATP-binding protein PstB 3 from Synechocystis sp. (strain ATCC 27184 / PCC 6803 / Kazusa).